The primary structure comprises 420 residues: Glucose-1-phosphate adenylyltransferase 2 (420 aa).

Residues tyrosine 109, glycine 175, 190 to 191 (EK), and serine 208 each bind alpha-D-glucose 1-phosphate.

Belongs to the bacterial/plant glucose-1-phosphate adenylyltransferase family. As to quaternary structure, homotetramer.

The enzyme catalyses alpha-D-glucose 1-phosphate + ATP + H(+) = ADP-alpha-D-glucose + diphosphate. It functions in the pathway glycan biosynthesis; glycogen biosynthesis. Its function is as follows. Involved in the biosynthesis of ADP-glucose, a building block required for the elongation reactions to produce glycogen. Catalyzes the reaction between ATP and alpha-D-glucose 1-phosphate (G1P) to produce pyrophosphate and ADP-Glc. The chain is Glucose-1-phosphate adenylyltransferase 2 from Pseudoalteromonas atlantica (strain T6c / ATCC BAA-1087).